The primary structure comprises 474 residues: tRNA-2-methylthio-N(6)-dimethylallyladenosine synthase (474 aa).

Residues 21–138 (ERVYVETQGC…LPQMLARRRS (118 aa)) form the MTTase N-terminal domain. Residues Cys-30, Cys-67, Cys-101, Cys-175, Cys-179, and Cys-182 each contribute to the [4Fe-4S] cluster site. Residues 161–395 (RAEGPTAYVS…ARLHEQQSAA (235 aa)) enclose the Radical SAM core domain. In terms of domain architecture, TRAM spans 397–460 (RALLGTRQSV…THSLRGRVVS (64 aa)).

It belongs to the methylthiotransferase family. MiaB subfamily. As to quaternary structure, monomer. [4Fe-4S] cluster serves as cofactor.

The protein resides in the cytoplasm. It catalyses the reaction N(6)-dimethylallyladenosine(37) in tRNA + (sulfur carrier)-SH + AH2 + 2 S-adenosyl-L-methionine = 2-methylsulfanyl-N(6)-dimethylallyladenosine(37) in tRNA + (sulfur carrier)-H + 5'-deoxyadenosine + L-methionine + A + S-adenosyl-L-homocysteine + 2 H(+). Its function is as follows. Catalyzes the methylthiolation of N6-(dimethylallyl)adenosine (i(6)A), leading to the formation of 2-methylthio-N6-(dimethylallyl)adenosine (ms(2)i(6)A) at position 37 in tRNAs that read codons beginning with uridine. The sequence is that of tRNA-2-methylthio-N(6)-dimethylallyladenosine synthase from Halorhodospira halophila (strain DSM 244 / SL1) (Ectothiorhodospira halophila (strain DSM 244 / SL1)).